The primary structure comprises 174 residues: Small ribosomal subunit protein uS5 (174 aa).

Residues 19–82 (LREKMIAVNR…EQARRGMFKV (64 aa)) enclose the S5 DRBM domain.

It belongs to the universal ribosomal protein uS5 family. Part of the 30S ribosomal subunit. Contacts proteins S4 and S8.

With S4 and S12 plays an important role in translational accuracy. Its function is as follows. Located at the back of the 30S subunit body where it stabilizes the conformation of the head with respect to the body. The polypeptide is Small ribosomal subunit protein uS5 (Bordetella bronchiseptica (strain ATCC BAA-588 / NCTC 13252 / RB50) (Alcaligenes bronchisepticus)).